Consider the following 597-residue polypeptide: NADH-quinone oxidoreductase subunit C/D (597 aa).

Positions 1 to 187 are NADH dehydrogenase I subunit C; the sequence is MIDENKKKNT…ESFFLDEQKE (187 aa). Positions 211–597 are NADH dehydrogenase I subunit D; sequence DFMFLNLGPN…IDFVMSDVDR (387 aa).

This sequence in the N-terminal section; belongs to the complex I 30 kDa subunit family. In the C-terminal section; belongs to the complex I 49 kDa subunit family. NDH-1 is composed of 13 different subunits. Subunits NuoB, CD, E, F, and G constitute the peripheral sector of the complex.

It is found in the cell inner membrane. The enzyme catalyses a quinone + NADH + 5 H(+)(in) = a quinol + NAD(+) + 4 H(+)(out). Its function is as follows. NDH-1 shuttles electrons from NADH, via FMN and iron-sulfur (Fe-S) centers, to quinones in the respiratory chain. The immediate electron acceptor for the enzyme in this species is believed to be ubiquinone. Couples the redox reaction to proton translocation (for every two electrons transferred, four hydrogen ions are translocated across the cytoplasmic membrane), and thus conserves the redox energy in a proton gradient. The sequence is that of NADH-quinone oxidoreductase subunit C/D from Buchnera aphidicola subsp. Schizaphis graminum (strain Sg).